A 692-amino-acid polypeptide reads, in one-letter code: ATP-dependent DNA helicase DinG (692 aa).

Positions 16–293 constitute a Helicase ATP-binding domain; sequence NLGNQLDNFI…AELAEYKKAA (278 aa). 56-63 contacts ATP; it reads AGTGIGKS. Residue C123 participates in [4Fe-4S] cluster binding. Residues 134–137 carry the DEAH box motif; that stretch reads NNDQ. Residues C192 and C202 each contribute to the [4Fe-4S] cluster site. Positions 247-250 match the DEAH box motif; sequence DEAH. Residues 514–692 form the Helicase C-terminal domain; the sequence is LIKTLPEYLE…PPFKRVIEYS (179 aa).

This sequence belongs to the helicase family. DinG subfamily. Type 1 sub-subfamily. [4Fe-4S] cluster is required as a cofactor.

It carries out the reaction Couples ATP hydrolysis with the unwinding of duplex DNA at the replication fork by translocating in the 5'-3' direction. This creates two antiparallel DNA single strands (ssDNA). The leading ssDNA polymer is the template for DNA polymerase III holoenzyme which synthesizes a continuous strand.. The enzyme catalyses ATP + H2O = ADP + phosphate + H(+). Its function is as follows. DNA-dependent ATPase and 5'-3' DNA helicase. Unwinds D-loops, R-loops, forked DNA and G-quadruplex DNA. This Photobacterium profundum (strain SS9) protein is ATP-dependent DNA helicase DinG.